Consider the following 515-residue polypeptide: MRTFAPWILSLLGASAVASAADATAEAPSDVVSLTGDTFETFVKEHDLVLAEFFAPWCGHCKALAPKYEQAATELKEKNIPLVKVDCTEEEALCRDQGVEGYPTLKIFRGLDAVKPYQGARQTEAIVSYMVKQSLPAVSPVTPENLEEIKTMDKIVVIGYIASDDQTANDIFTTFAESQRDNYLFAATSDASIAKAEGVKQPSIVLYKDFDEKKATYDGEIEQDALLSWVKTASTPLVGELGPETYSGYITAGIPLAYIFAETKEEREQFTEEFKFIAEKHKGSINIVTIDAKLYGAHAGNLNLDPSKFPAFAIQDPEKNAKYPYDQSKEVKAKDIGKFIQDVLDDKVEPSIKSEAIPETQEGPVTVVVAHSYKDLVLDNEKDVLLEFYAPWCGHCKALAPKYEELASLYKDIPEVTIAKIDATANDVPDSITGFPTIKLFAAGAKDSPVEYEGSRTVEDLANFVKENGKHKVDALEVDPKKEQESGDATETRAASDETETPAATSDDKSEHDEL.

An N-terminal signal peptide occupies residues 1-20 (MRTFAPWILSLLGASAVASA). Thioredoxin domains follow at residues 21 to 136 (ADAT…QSLP) and 343 to 470 (VLDD…ENGK). Active-site nucleophile residues include C58, C61, C393, and C396. Disulfide bonds link C58–C61 and C393–C396. 2 stretches are compositionally biased toward basic and acidic residues: residues 472–496 (KVDA…RAAS) and 506–515 (SDDKSEHDEL). The tract at residues 472 to 515 (KVDALEVDPKKEQESGDATETRAASDETETPAATSDDKSEHDEL) is disordered. The short motif at 512–515 (HDEL) is the Prevents secretion from ER element.

The protein belongs to the protein disulfide isomerase family.

It is found in the endoplasmic reticulum lumen. It carries out the reaction Catalyzes the rearrangement of -S-S- bonds in proteins.. Functionally, participates in the folding of proteins containing disulfide bonds, may be involved in glycosylation, prolyl hydroxylation and triglyceride transfer. The chain is Protein disulfide-isomerase (pdiA) from Aspergillus oryzae (strain ATCC 42149 / RIB 40) (Yellow koji mold).